The chain runs to 261 residues: tRNA U34 carboxymethyltransferase (261 aa).

Carboxy-S-adenosyl-L-methionine contacts are provided by residues K25, W39, K44, G63, 114 to 115, Y135, and R250; that span reads VE.

The protein belongs to the class I-like SAM-binding methyltransferase superfamily. CmoB family. As to quaternary structure, homotetramer.

It catalyses the reaction carboxy-S-adenosyl-L-methionine + 5-hydroxyuridine(34) in tRNA = 5-carboxymethoxyuridine(34) in tRNA + S-adenosyl-L-homocysteine + H(+). In terms of biological role, catalyzes carboxymethyl transfer from carboxy-S-adenosyl-L-methionine (Cx-SAM) to 5-hydroxyuridine (ho5U) to form 5-carboxymethoxyuridine (cmo5U) at position 34 in tRNAs. The chain is tRNA U34 carboxymethyltransferase from Helicobacter pylori (strain HPAG1).